The sequence spans 285 residues: (3S)-malyl-CoA thioesterase (285 aa).

Arginine 70 and glutamate 122 together coordinate substrate. Residues glutamate 122 and aspartate 148 each coordinate Mg(2+).

This sequence belongs to the HpcH/HpaI aldolase family. In terms of assembly, homodimer or homotrimer. The cofactor is Mg(2+).

It catalyses the reaction (S)-malyl-CoA + H2O = (S)-malate + CoA + H(+). Functionally, catalyzes the hydrolysis of (3S)-malyl-CoA to (3S)-malate and free CoA. Inactive towards beta-methylmalyl-CoA and other CoA esters. The protein is (3S)-malyl-CoA thioesterase of Cereibacter sphaeroides (strain ATCC 17025 / ATH 2.4.3) (Rhodobacter sphaeroides).